The sequence spans 547 residues: Chaperonin GroEL 1 (547 aa).

ATP is bound by residues 30–33 (TLGP), lysine 51, 87–91 (DGTTT), glycine 415, 479–481 (NAA), and aspartate 495. Residues 525 to 547 (PKKKGAPAGGGMGGMGGMDEMDY) form a disordered region. Gly residues predominate over residues 531–541 (PAGGGMGGMGG).

This sequence belongs to the chaperonin (HSP60) family. In terms of assembly, forms a cylinder of 14 subunits composed of two heptameric rings stacked back-to-back. Interacts with the co-chaperonin GroES.

It localises to the cytoplasm. The catalysed reaction is ATP + H2O + a folded polypeptide = ADP + phosphate + an unfolded polypeptide.. Its function is as follows. Together with its co-chaperonin GroES, plays an essential role in assisting protein folding. The GroEL-GroES system forms a nano-cage that allows encapsulation of the non-native substrate proteins and provides a physical environment optimized to promote and accelerate protein folding. The protein is Chaperonin GroEL 1 of Anaeromyxobacter sp. (strain Fw109-5).